The primary structure comprises 260 residues: Putative ATP-binding protein BAB2_1147 (260 aa).

The region spanning 5 to 228 (ISFNNVVMRY…DLPYPRTEAI (224 aa)) is the ABC transporter domain. 37–44 (GPSGCGKS) contacts ATP.

Belongs to the ABC transporter superfamily. In terms of assembly, the complex is composed of two ATP-binding proteins (BAB2_1147), two transmembrane proteins (BAB2_1148) and a solute-binding protein (BAB2_1146).

The protein resides in the cell inner membrane. Functionally, probably part of an ABC transporter complex. Probably Responsible for energy coupling to the transport system. The polypeptide is Putative ATP-binding protein BAB2_1147 (Brucella abortus (strain 2308)).